The chain runs to 529 residues: uncharacterized protein (529 aa).

The Arf-GAP domain maps to 13-129 (QTAMRKMRAL…LSTLCQEAQR (117 aa)). The segment at 28 to 51 (CFDCGARNPTWCTVTYGVFLCIDC) adopts a C4-type zinc-finger fold. A compositionally biased stretch (basic and acidic residues) spans 291-301 (QMEAKVAKDPT). Disordered stretches follow at residues 291 to 313 (QMEAKVAKDPTKAASVDRLGMGG), 335 to 357 (VLTFKKPSQPKEDDDWEVIDDKY), 398 to 424 (KSRYTASSSSSSTSRAPTTRLTAGASP), and 468 to 493 (FGSEDLWGNGSQQRQSSQVPDMSDLK). Low complexity predominate over residues 399-420 (SRYTASSSSSSTSRAPTTRLTA). A compositionally biased stretch (polar residues) spans 476–487 (NGSQQRQSSQVP).

Its function is as follows. GTPase-activating protein for the ADP ribosylation factor family. This is an uncharacterized protein from Caenorhabditis elegans.